The sequence spans 195 residues: Large ribosomal subunit protein uL5 (195 aa).

Residues 1-25 (MARVPPPALKKDKKEKKPPKDNSKN) are disordered.

Belongs to the universal ribosomal protein uL5 family. In terms of assembly, component of the large ribosomal subunit.

The protein resides in the nucleus. It is found in the cytoplasm. In terms of biological role, component of the ribosome, a large ribonucleoprotein complex responsible for the synthesis of proteins in the cell. The small ribosomal subunit (SSU) binds messenger RNAs (mRNAs) and translates the encoded message by selecting cognate aminoacyl-transfer RNA (tRNA) molecules. The large subunit (LSU) contains the ribosomal catalytic site termed the peptidyl transferase center (PTC), which catalyzes the formation of peptide bonds, thereby polymerizing the amino acids delivered by tRNAs into a polypeptide chain. The nascent polypeptides leave the ribosome through a tunnel in the LSU and interact with protein factors that function in enzymatic processing, targeting, and the membrane insertion of nascent chains at the exit of the ribosomal tunnel. This chain is Large ribosomal subunit protein uL5 (RpL11), found in Spodoptera frugiperda (Fall armyworm).